A 359-amino-acid polypeptide reads, in one-letter code: 3-isopropylmalate dehydrogenase (359 aa).

Glycine 76 to glutamate 89 is an NAD(+) binding site. Substrate is bound by residues arginine 96, arginine 106, arginine 134, and aspartate 225. 3 residues coordinate Mg(2+): aspartate 225, aspartate 249, and aspartate 253. Glycine 283–asparagine 295 lines the NAD(+) pocket.

This sequence belongs to the isocitrate and isopropylmalate dehydrogenases family. LeuB type 1 subfamily. As to quaternary structure, homodimer. The cofactor is Mg(2+). Mn(2+) is required as a cofactor.

It localises to the cytoplasm. It catalyses the reaction (2R,3S)-3-isopropylmalate + NAD(+) = 4-methyl-2-oxopentanoate + CO2 + NADH. Its pathway is amino-acid biosynthesis; L-leucine biosynthesis; L-leucine from 3-methyl-2-oxobutanoate: step 3/4. Catalyzes the oxidation of 3-carboxy-2-hydroxy-4-methylpentanoate (3-isopropylmalate) to 3-carboxy-4-methyl-2-oxopentanoate. The product decarboxylates to 4-methyl-2 oxopentanoate. This Acinetobacter baylyi (strain ATCC 33305 / BD413 / ADP1) protein is 3-isopropylmalate dehydrogenase.